The sequence spans 470 residues: Argininosuccinate lyase (470 aa).

Belongs to the lyase 1 family. Argininosuccinate lyase subfamily.

Its subcellular location is the cytoplasm. The enzyme catalyses 2-(N(omega)-L-arginino)succinate = fumarate + L-arginine. The protein operates within amino-acid biosynthesis; L-arginine biosynthesis; L-arginine from L-ornithine and carbamoyl phosphate: step 3/3. The sequence is that of Argininosuccinate lyase from Synechococcus sp. (strain WH7803).